The sequence spans 915 residues: Protein O-mannosyl-transferase TMTC3 (915 aa).

Over 1-8 (MANINLKE) the chain is Cytoplasmic. The chain crosses the membrane as a helical span at residues 9 to 29 (ITLIVGVVTACYWNSLFCGFV). At 30–93 (FDDVSAILDN…LSELKPMSYH (64 aa)) the chain is on the extracellular side. Residues 94–114 (LLNMIFHAVVSVIFLKVCKLF) form a helical membrane-spanning segment. At 115–120 (LDNKSS) the chain is on the cytoplasmic side. Helical transmembrane passes span 121–139 (VIASLLFAVHPIHTEAVTG) and 140–158 (VVGRAELLSSIFFLAAFLS). The Cytoplasmic portion of the chain corresponds to 159 to 166 (YTRSKGPD). A helical membrane pass occupies residues 167–187 (NSIIWTPIALTVFLVAVATLC). Residues 188–193 (KEQGIT) lie on the Extracellular side of the membrane. A helical transmembrane segment spans residues 194–214 (VVGICCVYEVFIAQGYTLPLL). The Cytoplasmic segment spans residues 215-231 (CTTAGQFLRGKGSIPFS). The helical transmembrane segment at 232–252 (MLQTLVKLIVLMFSTLLLVVI) threads the bilayer. Residues 253–317 (RVQVIQSQLP…TIPLIESLLD (65 aa)) lie on the Extracellular side of the membrane. Residues 318 to 338 (IRNLATFTFFCFLGMLGVFSI) form a helical membrane-spanning segment. At 339-353 (RYSGDSSKTVLMALC) the chain is on the cytoplasmic side. Residues 354–374 (LMALPFIPASNLFFPVGFVVA) traverse the membrane as a helical segment. The Extracellular portion of the chain corresponds to 375 to 376 (ER). Residues 377 to 397 (VLYVPSMGFCILVAHGWQKIS) form a helical membrane-spanning segment. Over 398 to 404 (TKSVFKK) the chain is Cytoplasmic. Residues 405–423 (LSWICLSMVILTHSLKTFH) form a helical membrane-spanning segment. Topologically, residues 424–915 (RNWDWESEYT…EEIERILNGE (492 aa)) are extracellular. 9 TPR repeats span residues 446 to 479 (AKLWNNVGHALENEKNFERALKYFLQATHVQPDD), 480 to 513 (IGAHMNVGRTYKNLNRTKEAEESYMMAKSLMPQI), 529 to 562 (NVYINLANLIRANESRLEEADQLYRQAISMRPDF), 563 to 596 (KQAYISRGELLLKMNKPLKAKEAYLKALELDRNN), 597 to 631 (ADLWYNLAIVHIELKEPNEALKKNFNRALELNPKH), 669 to 702 (ANGYFNLGMLAMDDKKDNEAEIWMKKAIKLQADF), 703 to 736 (RSALFNLALLYSQTAKELKALPILEELLRYYPDH), 738 to 771 (KGLILKGDILMNQKKDILGAKKCFERILEMDPSN), and 772 to 805 (VQGKHNLCVVYFEEKDLLKAERCLLETLALAPHE). N-linked (GlcNAc...) asparagine glycosylation occurs at Asn-494. The residue at position 503 (Tyr-503) is a Phosphotyrosine. Asn-541 carries an N-linked (GlcNAc...) asparagine glycan. The segment at 848-892 (KEIRGESRQTQIVKTSDNKSQSKSNKQLGKNGDEETPHKTTKDIK) is disordered. Asn-865 is a glycosylation site (N-linked (GlcNAc...) asparagine). Residues 865 to 874 (NKSQSKSNKQ) show a composition bias toward low complexity. Residues 878–892 (NGDEETPHKTTKDIK) are compositionally biased toward basic and acidic residues.

This sequence belongs to the TMTC family.

The protein localises to the membrane. Its subcellular location is the endoplasmic reticulum. It carries out the reaction a di-trans,poly-cis-dolichyl beta-D-mannosyl phosphate + L-seryl-[protein] = 3-O-(alpha-D-mannosyl)-L-seryl-[protein] + a di-trans,poly-cis-dolichyl phosphate + H(+). The enzyme catalyses a di-trans,poly-cis-dolichyl beta-D-mannosyl phosphate + L-threonyl-[protein] = 3-O-(alpha-D-mannosyl)-L-threonyl-[protein] + a di-trans,poly-cis-dolichyl phosphate + H(+). It participates in protein modification; protein glycosylation. Its function is as follows. Transfers mannosyl residues to the hydroxyl group of serine or threonine residues. The 4 members of the TMTC family are O-mannosyl-transferases dedicated primarily to the cadherin superfamily, each member seems to have a distinct role in decorating the cadherin domains with O-linked mannose glycans at specific regions. Also acts as O-mannosyl-transferase on other proteins such as PDIA3. Involved in the positive regulation of proteasomal protein degradation in the endoplasmic reticulum (ER), and the control of ER stress response. The sequence is that of Protein O-mannosyl-transferase TMTC3 from Homo sapiens (Human).